The sequence spans 296 residues: ATP-dependent ribose-1-phosphate kinase (296 aa).

The Proton acceptor role is filled by Asp242.

It belongs to the carbohydrate kinase PfkB family. It depends on Mg(2+) as a cofactor.

It catalyses the reaction alpha-D-ribose 1-phosphate + ATP = alpha-D-ribose 1,5-bisphosphate + ADP + H(+). Its activity is regulated as follows. Requires salt for kinase activity. 2.0 M is the optimal KCl concentration. Functionally, kinase involved in the non-carboxylating pentose bisphosphate pathway, a nucleoside degradation pathway present in some halophilic archaea. Catalyzes the ATP-dependent phosphorylation of ribose 1-phosphate (R1P) to ribose 1,5-bisphosphate (R15P). Shows weak activity towards various other phosphate acceptors, such as xylulose, 2'-deoxyguanosine and D-ribulose. ATP is the most preferred phosphate donor, followed by CTP and GTP. This is ATP-dependent ribose-1-phosphate kinase from Halopiger xanaduensis (strain DSM 18323 / JCM 14033 / SH-6).